The following is a 137-amino-acid chain: MMQPKKTKFRKAHKGRIHGVASSGATLAFGQFGLKAMEPDRVTARQIEAARRALTRHMKRAGRVWIRVFPDLPVSKKPAEVRMGSGKGSPELWVARVKPGRVMFEIDGVSNQIAREALTLAAAKLPIKTRFVERIAE.

It belongs to the universal ribosomal protein uL16 family. As to quaternary structure, part of the 50S ribosomal subunit.

In terms of biological role, binds 23S rRNA and is also seen to make contacts with the A and possibly P site tRNAs. The polypeptide is Large ribosomal subunit protein uL16 (Bradyrhizobium sp. (strain ORS 278)).